Here is a 241-residue protein sequence, read N- to C-terminus: Uridylate kinase (241 aa).

ATP is bound at residue 15-18 (KLSG). Residues 23–28 (GTEGFG) are involved in allosteric activation by GTP. Gly57 is a binding site for UMP. Positions 58 and 62 each coordinate ATP. Residues Asp77 and 138–145 (TGNPFFTT) contribute to the UMP site. ATP contacts are provided by Thr165, Phe171, and Asp174.

It belongs to the UMP kinase family. In terms of assembly, homohexamer.

The protein resides in the cytoplasm. It carries out the reaction UMP + ATP = UDP + ADP. The protein operates within pyrimidine metabolism; CTP biosynthesis via de novo pathway; UDP from UMP (UMPK route): step 1/1. With respect to regulation, allosterically activated by GTP. Inhibited by UTP. Catalyzes the reversible phosphorylation of UMP to UDP. The polypeptide is Uridylate kinase (Shigella dysenteriae serotype 1 (strain Sd197)).